We begin with the raw amino-acid sequence, 162 residues long: NADH-quinone oxidoreductase subunit I (162 aa).

2 4Fe-4S ferredoxin-type domains span residues 52–82 and 93–122; these read LRRY…IEAG and VRYD…EGPN. [4Fe-4S] cluster-binding residues include Cys-62, Cys-65, Cys-68, Cys-72, Cys-102, Cys-105, Cys-108, and Cys-112.

This sequence belongs to the complex I 23 kDa subunit family. In terms of assembly, NDH-1 is composed of 14 different subunits. Subunits NuoA, H, J, K, L, M, N constitute the membrane sector of the complex. The cofactor is [4Fe-4S] cluster.

Its subcellular location is the cell inner membrane. It catalyses the reaction a quinone + NADH + 5 H(+)(in) = a quinol + NAD(+) + 4 H(+)(out). Its function is as follows. NDH-1 shuttles electrons from NADH, via FMN and iron-sulfur (Fe-S) centers, to quinones in the respiratory chain. The immediate electron acceptor for the enzyme in this species is believed to be ubiquinone. Couples the redox reaction to proton translocation (for every two electrons transferred, four hydrogen ions are translocated across the cytoplasmic membrane), and thus conserves the redox energy in a proton gradient. This is NADH-quinone oxidoreductase subunit I from Nitrobacter winogradskyi (strain ATCC 25391 / DSM 10237 / CIP 104748 / NCIMB 11846 / Nb-255).